Consider the following 738-residue polypeptide: Wall-associated receptor kinase 4 (738 aa).

The signal sequence occupies residues 1–22 (MKVQRLFLVAIFCLSYMQLVKG). Residues 23-335 (QTLPRCPEKC…PKGNPEYVEW (313 aa)) lie on the Extracellular side of the membrane. 7 N-linked (GlcNAc...) asparagine glycosylation sites follow: N34, N56, N109, N115, N132, N182, and N208. In terms of domain architecture, EGF-like 1 spans 232–278 (RGETCGQVGEKKCGVNGICSNSASGIGYTCKCKGGFQGNPYLQNGCQ). 6 disulfides stabilise this stretch: C236–C250, C244–C261, C263–C277, C283–C300, C294–C309, and C311–C324. The 47-residue stretch at 279–325 (DINECTTANPIHKHNCSGDSTCENKLGHFRCNCRSRYELNTTTNTCK) folds into the EGF-like 2; calcium-binding domain. Residue N293 is glycosylated (N-linked (GlcNAc...) asparagine). Residue N318 is glycosylated (N-linked (GlcNAc...) asparagine). Residues 336–356 (TTIVLGTTIGFLVILLAISCI) traverse the membrane as a helical segment. Over 357 to 738 (EHKMKNTKDT…VAILDIEAGR (382 aa)) the chain is Cytoplasmic. The residue at position 399 (T399) is a Phosphothreonine. Residues 410–693 (YDENRILGQG…RVTKTKHKWS (284 aa)) enclose the Protein kinase domain. ATP-binding positions include 416–424 (LGQGGQGTV) and K438. Y483 is subject to Phosphotyrosine. The Proton acceptor role is filled by D535. Phosphothreonine occurs at positions 569 and 574. Position 582 is a phosphotyrosine (Y582).

Belongs to the protein kinase superfamily. Ser/Thr protein kinase family. Strictly expressed in siliques.

It is found in the membrane. The catalysed reaction is L-seryl-[protein] + ATP = O-phospho-L-seryl-[protein] + ADP + H(+). The enzyme catalyses L-threonyl-[protein] + ATP = O-phospho-L-threonyl-[protein] + ADP + H(+). In terms of biological role, serine/threonine-protein kinase that may function as a signaling receptor of extracellular matrix component. Binding to pectin may have significance in the control of cell expansion, morphogenesis and development. The protein is Wall-associated receptor kinase 4 (WAK4) of Arabidopsis thaliana (Mouse-ear cress).